The chain runs to 417 residues: Oxidoreductase phnG (417 aa).

6-hydroxy-FAD is bound by residues 16-20 (GGSYA), Arg61, and Asp317.

Belongs to the FAD-dependent oxidoreductase family. Requires 6-hydroxy-FAD as cofactor.

It carries out the reaction deoxyherqueinone + NADPH + O2 + H(+) = herqueinone + NADP(+) + H2O. It functions in the pathway secondary metabolite biosynthesis. Functionally, oxidoreductase; part of the gene cluster that mediates the biosynthesis of phenalenones such as herqueinone, compounds that have been reported to treat tumors, bacterial infections and/or mycoses, and rheumatic diseases. The non-reducing polyketide synthase phnA synthesizes the heptaketide backbone and cyclizes it into the angular, hemiketal-containing naphtho-gamma-pyrone prephenalenone. The product template (PT) domain of phnA catalyzes only the C4-C9 aldol condensation, which is unprecedented among known PT domains. The transformation of prephenalenone to phenalenones requires an FAD-dependent monooxygenase phnB, which catalyzes the C2 aromatic hydroxylation of prephenalenone and ring opening of the gamma-pyrone ring simultaneously. Subsequent intramolecular deprotonation of C3 phenolic oxygen accelerates phenalenone ring closure to yield the tricyclic phenalenone core with a C2 hydroxylation. The prenyltransferase phnF further catalyzes reverse C-prenylation of phenalenone by direct electrophilic substitution at C6, or possibly via first a forward O-prenylation of a neighboring phenol in phenalenone, followed by a Claisen rearrangement. The hydroalkoxylation enzyme phnH catalyzes the 5-exo-trig cyclization via acid catalysis after the spontaneous deprotonation of 7-OH, which leads to the formation of the dihydrobenzofuran atrovenetin. Atrovenetin is further converted to deoxyherqueinone by the O-methyltransferase phnC which can methylate C2-OH to stabilize the northern portion of the phenalenone core. Finally, the oxidoreductase phnG converts deoxyherqueinone to herqueinone via C6 hydroxylation. This chain is Oxidoreductase phnG, found in Penicillium herquei.